The primary structure comprises 101 residues: Small ribosomal subunit protein uS14 (101 aa).

The tract at residues Met-1 to Ala-21 is disordered.

This sequence belongs to the universal ribosomal protein uS14 family. In terms of assembly, part of the 30S ribosomal subunit. Contacts proteins S3 and S10.

In terms of biological role, binds 16S rRNA, required for the assembly of 30S particles and may also be responsible for determining the conformation of the 16S rRNA at the A site. This is Small ribosomal subunit protein uS14 from Agrobacterium fabrum (strain C58 / ATCC 33970) (Agrobacterium tumefaciens (strain C58)).